A 173-amino-acid polypeptide reads, in one-letter code: MSDRATTTASLTFESLYGTHHGWLKSWLTRKLQSAFDADDIAQDTFLRVMVSETLSTIRDPRSFLCTIAKRVMVDLFRRNALEKAYLEMLALMPEGGAPSPEERESQLETLQLLDSMLDGLNGKTREAFLLSQLDGLTYSEIAHKLGVSISSVKKYVAKAVEHCLLFRLEYGL.

A Polymerase core binding motif is present at residues 40–52; that stretch reads DIAQDTFLRVMVS. The segment at residues 139–158 is a DNA-binding region (H-T-H motif); it reads YSEIAHKLGVSISSVKKYVA.

This sequence belongs to the sigma-70 factor family. ECF subfamily. As to quaternary structure, interacts with FecR (via cytoplasmic N-terminus).

In terms of biological role, sigma factors are initiation factors that promote the attachment of RNA polymerase to specific initiation sites and are then released. This sigma factor regulates transcriptional activation of the fecABCDE operon which mediates ferric citrate transport. The chain is Ferric citrate uptake sigma factor FecI (fecI) from Escherichia coli (strain K12).